The sequence spans 140 residues: Alpha-lactalbumin (140 aa).

Positions 1–19 (MMSLLSLLLLGIALPATQA) are cleaved as a signal peptide. The 121-residue stretch at 20-140 (IDYRKCQASQ…CIEDLDQWRC (121 aa)) folds into the C-type lysozyme domain. 4 disulfides stabilise this stretch: cysteine 25–cysteine 140, cysteine 47–cysteine 131, cysteine 80–cysteine 96, and cysteine 92–cysteine 110. An N-linked (GlcNAc...) asparagine glycan is attached at asparagine 63. Ca(2+) is bound by residues lysine 98, aspartate 101, aspartate 103, aspartate 106, and aspartate 107.

This sequence belongs to the glycosyl hydrolase 22 family. Lactose synthase (LS) is a heterodimer of a catalytic component, beta1,4-galactosyltransferase (beta4Gal-T1) and a regulatory component, alpha-lactalbumin (LA). In terms of tissue distribution, mammary gland specific. Secreted in milk.

Its subcellular location is the secreted. Functionally, regulatory subunit of lactose synthase, changes the substrate specificity of galactosyltransferase in the mammary gland making glucose a good acceptor substrate for this enzyme. This enables LS to synthesize lactose, the major carbohydrate component of milk. In other tissues, galactosyltransferase transfers galactose onto the N-acetylglucosamine of the oligosaccharide chains in glycoproteins. This chain is Alpha-lactalbumin (LALBA), found in Notamacropus eugenii (Tammar wallaby).